The sequence spans 72 residues: MAKEDNFELEGEVIDTLPNTTFRVKLENGHVVTAHISGKMRKNYIRILTGDKVKVEMTPYDLSKGRITYRAR.

An S1-like domain is found at 1–72; that stretch reads MAKEDNFELE…SKGRITYRAR (72 aa).

It belongs to the IF-1 family. In terms of assembly, component of the 30S ribosomal translation pre-initiation complex which assembles on the 30S ribosome in the order IF-2 and IF-3, IF-1 and N-formylmethionyl-tRNA(fMet); mRNA recruitment can occur at any time during PIC assembly.

It localises to the cytoplasm. One of the essential components for the initiation of protein synthesis. Stabilizes the binding of IF-2 and IF-3 on the 30S subunit to which N-formylmethionyl-tRNA(fMet) subsequently binds. Helps modulate mRNA selection, yielding the 30S pre-initiation complex (PIC). Upon addition of the 50S ribosomal subunit IF-1, IF-2 and IF-3 are released leaving the mature 70S translation initiation complex. The sequence is that of Translation initiation factor IF-1 from Saccharophagus degradans (strain 2-40 / ATCC 43961 / DSM 17024).